A 216-amino-acid chain; its full sequence is Cytidylate kinase (216 aa).

Position 10 to 18 (10 to 18 (GPAGAGKST)) interacts with ATP.

Belongs to the cytidylate kinase family. Type 1 subfamily.

The protein localises to the cytoplasm. The catalysed reaction is CMP + ATP = CDP + ADP. It carries out the reaction dCMP + ATP = dCDP + ADP. This is Cytidylate kinase from Clostridioides difficile (strain 630) (Peptoclostridium difficile).